The chain runs to 193 residues: Pilin-like protein PilA2 (193 aa).

Positions 1–4 (MRKG) are cleaved as a propeptide — leader sequence. The residue at position 5 (L5) is an N-methylleucine. Residues 5–25 (LTLVEVLVTLVIMGIAFAALL) form a helical membrane-spanning segment.

Its subcellular location is the cell inner membrane. The protein resides in the cell outer membrane. The protein localises to the periplasm. In terms of biological role, plays an essential role in natural DNA transformation but is not required for pilus biogenesis. The polypeptide is Pilin-like protein PilA2 (pilA2) (Thermus thermophilus (strain ATCC BAA-163 / DSM 7039 / HB27)).